The following is a 179-amino-acid chain: Large ribosomal subunit protein bL19 (179 aa).

It belongs to the bacterial ribosomal protein bL19 family.

In terms of biological role, this protein is located at the 30S-50S ribosomal subunit interface and may play a role in the structure and function of the aminoacyl-tRNA binding site. The polypeptide is Large ribosomal subunit protein bL19 (Rhizobium johnstonii (strain DSM 114642 / LMG 32736 / 3841) (Rhizobium leguminosarum bv. viciae)).